A 353-amino-acid chain; its full sequence is MKIDANKEKALNAVLGQIEKQFGKGSIMKLGENRSMDVETISTGSLSLDVALGAGGLPMGRIVEIYGPESSGKTTLTLELIAAAQREGKVCAFIDAEHALDPIYAKKLGVDIDNLLCSQPDTGEQALEICDALTRSGAVDVIVVDSVAALTPKAEIEGEIGDSHMGLAARMMSQAMRKLAGNLKQTNTMLIFINQIRMKIGVMFGNPETTTGGNALKFYASVRLDIRRTGAIKERDEVVGNETRVKVVKNKIAAPFKQAEFQILYGQGINRTGELVDLGVAHKLVEKAGAWYSYKGDKIGQGRANAGKFLLDNPAIAEEIDTALRGMLLASVEPAVESEVGDENVDLETGEIF.

ATP is bound at residue 67–74 (GPESSGKT).

This sequence belongs to the RecA family.

Its subcellular location is the cytoplasm. In terms of biological role, can catalyze the hydrolysis of ATP in the presence of single-stranded DNA, the ATP-dependent uptake of single-stranded DNA by duplex DNA, and the ATP-dependent hybridization of homologous single-stranded DNAs. It interacts with LexA causing its activation and leading to its autocatalytic cleavage. The chain is Protein RecA from Shewanella woodyi (strain ATCC 51908 / MS32).